Here is a 516-residue protein sequence, read N- to C-terminus: Probable malate:quinone oxidoreductase (516 aa).

The protein belongs to the MQO family. FAD serves as cofactor.

It carries out the reaction (S)-malate + a quinone = a quinol + oxaloacetate. The protein operates within carbohydrate metabolism; tricarboxylic acid cycle; oxaloacetate from (S)-malate (quinone route): step 1/1. This is Probable malate:quinone oxidoreductase from Mycobacterium sp. (strain MCS).